The following is a 307-amino-acid chain: Malate dehydrogenase (307 aa).

NAD(+) contacts are provided by residues 8–13 (GAGNVG) and D32. 2 residues coordinate substrate: R81 and R87. Residues N94 and 117 to 119 (VSN) each bind NAD(+). Residues N119 and R150 each coordinate substrate. H174 serves as the catalytic Proton acceptor.

The protein belongs to the LDH/MDH superfamily. MDH type 3 family.

The enzyme catalyses (S)-malate + NAD(+) = oxaloacetate + NADH + H(+). Functionally, catalyzes the reversible oxidation of malate to oxaloacetate. The polypeptide is Malate dehydrogenase (Dehalococcoides mccartyi (strain ATCC BAA-2266 / KCTC 15142 / 195) (Dehalococcoides ethenogenes (strain 195))).